A 472-amino-acid chain; its full sequence is Flap endonuclease 1 (472 aa).

The tract at residues Met-1–Arg-106 is N-domain. Asp-34 provides a ligand contact to Mg(2+). 2 residues coordinate DNA: Arg-47 and Arg-72. Residues Asp-88, Glu-160, Glu-162, Asp-181, and Asp-183 each coordinate Mg(2+). The I-domain stretch occupies residues Thr-124 to His-263. Position 160 (Glu-160) interacts with DNA. The DNA site is built by Gly-241 and Asp-243. Asp-243 is a binding site for Mg(2+). Residues Ala-348 to Phe-356 form an interaction with PCNA region.

Belongs to the XPG/RAD2 endonuclease family. FEN1 subfamily. As to quaternary structure, interacts with PCNA. Three molecules of FEN1 bind to one PCNA trimer with each molecule binding to one PCNA monomer. PCNA stimulates the nuclease activity without altering cleavage specificity. Requires Mg(2+) as cofactor. Phosphorylated. Phosphorylation upon DNA damage induces relocalization to the nuclear plasma.

The protein resides in the nucleus. The protein localises to the nucleolus. It is found in the nucleoplasm. It localises to the mitochondrion. Functionally, structure-specific nuclease with 5'-flap endonuclease and 5'-3' exonuclease activities involved in DNA replication and repair. During DNA replication, cleaves the 5'-overhanging flap structure that is generated by displacement synthesis when DNA polymerase encounters the 5'-end of a downstream Okazaki fragment. It enters the flap from the 5'-end and then tracks to cleave the flap base, leaving a nick for ligation. Also involved in the long patch base excision repair (LP-BER) pathway, by cleaving within the apurinic/apyrimidinic (AP) site-terminated flap. Acts as a genome stabilization factor that prevents flaps from equilibrating into structures that lead to duplications and deletions. Also possesses 5'-3' exonuclease activity on nicked or gapped double-stranded DNA, and exhibits RNase H activity. Also involved in replication and repair of rDNA and in repairing mitochondrial DNA. In Cryptosporidium muris (strain RN66), this protein is Flap endonuclease 1.